Consider the following 171-residue polypeptide: Peptide deformylase (171 aa).

Fe cation contacts are provided by Cys91 and His133. The active site involves Glu134. His137 is a binding site for Fe cation.

Belongs to the polypeptide deformylase family. Fe(2+) is required as a cofactor.

The enzyme catalyses N-terminal N-formyl-L-methionyl-[peptide] + H2O = N-terminal L-methionyl-[peptide] + formate. Its function is as follows. Removes the formyl group from the N-terminal Met of newly synthesized proteins. Requires at least a dipeptide for an efficient rate of reaction. N-terminal L-methionine is a prerequisite for activity but the enzyme has broad specificity at other positions. This Hamiltonella defensa subsp. Acyrthosiphon pisum (strain 5AT) protein is Peptide deformylase.